The chain runs to 399 residues: Enolase (399 aa).

Q149 serves as a coordination point for (2R)-2-phosphoglycerate. The active-site Proton donor is the E191. Residues D227, E268, and D293 each contribute to the Mg(2+) site. Residues K318, R347, S348, and K369 each contribute to the (2R)-2-phosphoglycerate site. The Proton acceptor role is filled by K318.

This sequence belongs to the enolase family. It depends on Mg(2+) as a cofactor.

It is found in the cytoplasm. The protein localises to the secreted. The protein resides in the cell surface. The enzyme catalyses (2R)-2-phosphoglycerate = phosphoenolpyruvate + H2O. It functions in the pathway carbohydrate degradation; glycolysis; pyruvate from D-glyceraldehyde 3-phosphate: step 4/5. Functionally, catalyzes the reversible conversion of 2-phosphoglycerate (2-PG) into phosphoenolpyruvate (PEP). It is essential for the degradation of carbohydrates via glycolysis. The protein is Enolase of Archaeoglobus fulgidus (strain ATCC 49558 / DSM 4304 / JCM 9628 / NBRC 100126 / VC-16).